A 342-amino-acid chain; its full sequence is N-acetyl-gamma-glutamyl-phosphate reductase (342 aa).

Cys156 is an active-site residue.

Belongs to the NAGSA dehydrogenase family. Type 1 subfamily.

Its subcellular location is the cytoplasm. It carries out the reaction N-acetyl-L-glutamate 5-semialdehyde + phosphate + NADP(+) = N-acetyl-L-glutamyl 5-phosphate + NADPH + H(+). Its pathway is amino-acid biosynthesis; L-arginine biosynthesis; N(2)-acetyl-L-ornithine from L-glutamate: step 3/4. Functionally, catalyzes the NADPH-dependent reduction of N-acetyl-5-glutamyl phosphate to yield N-acetyl-L-glutamate 5-semialdehyde. This chain is N-acetyl-gamma-glutamyl-phosphate reductase, found in Pseudoalteromonas atlantica (strain T6c / ATCC BAA-1087).